Consider the following 439-residue polypeptide: Cln5-like protein 3 (439 aa).

Positions methionine 1–serine 24 are cleaved as a signal peptide. N-linked (GlcNAc...) asparagine glycans are attached at residues asparagine 93, asparagine 112, asparagine 122, asparagine 138, asparagine 168, asparagine 219, asparagine 268, asparagine 289, asparagine 304, and asparagine 359. A helical transmembrane segment spans residues isoleucine 371–glycine 391.

This sequence belongs to the CLN5 family.

Its subcellular location is the membrane. This is Cln5-like protein 3 (cln5lc) from Dictyostelium discoideum (Social amoeba).